A 1406-amino-acid chain; its full sequence is DNA topoisomerase 2 (1406 aa).

ATP is bound by residues N69, N98, 126-128, and 139-146; these read SSN and GRNGYGAK. Positions 332–334 are interaction with DNA; it reads KKK. 363–365 provides a ligand contact to ATP; that stretch reads QTK. The Toprim domain maps to 441–555; sequence CTLILTEGDS…GLLDIPGFLI (115 aa). The Mg(2+) site is built by E447, D524, and D526. One can recognise a Topo IIA-type catalytic domain in the interval 690–1159; sequence IPSVLDGFKP…SAKDLWNNDL (470 aa). Y780 acts as the O-(5'-phospho-DNA)-tyrosine intermediate in catalysis. Residues 963 to 972 are interaction with DNA; the sequence is KLISPISLQN. Residues 1079 to 1089 are compositionally biased toward acidic residues; it reads EDEDEDLEESE. Disordered regions lie at residues 1079–1106, 1183–1215, 1230–1287, and 1303–1406; these read EDED…VNGP, KTKG…KKIK, KIKA…DESG, and DEDA…FNDE. Basic and acidic residues predominate over residues 1090–1100; it reads EATRKKDKDDE. Over residues 1204-1214 the composition is skewed to basic residues; it reads KKKPARRIKKI. Positions 1261–1274 are enriched in polar residues; sequence DVTSNASTPSTTIF. Positions 1326 to 1336 are enriched in basic residues; it reads AKKKAPPKRKA. 2 stretches are compositionally biased toward acidic residues: residues 1341–1359 and 1381–1406; these read SSED…DEEV and EISD…FNDE.

It belongs to the type II topoisomerase family. In terms of assembly, homodimer. Requires Mg(2+) as cofactor. Mn(2+) is required as a cofactor. The cofactor is Ca(2+).

It is found in the nucleus. It carries out the reaction ATP-dependent breakage, passage and rejoining of double-stranded DNA.. Control of topological states of DNA by transient breakage and subsequent rejoining of DNA strands. Topoisomerase II makes double-strand breaks. The polypeptide is DNA topoisomerase 2 (TOP2) (Candida glabrata (strain ATCC 2001 / BCRC 20586 / JCM 3761 / NBRC 0622 / NRRL Y-65 / CBS 138) (Yeast)).